The following is a 144-amino-acid chain: Transcriptional regulator MraZ (144 aa).

SpoVT-AbrB domains lie at 5–47 (EYQY…PLDR) and 76–121 (AHKT…SQER).

Belongs to the MraZ family. Forms oligomers.

The protein localises to the cytoplasm. The protein resides in the nucleoid. The protein is Transcriptional regulator MraZ of Thermus thermophilus (strain ATCC BAA-163 / DSM 7039 / HB27).